We begin with the raw amino-acid sequence, 308 residues long: MQSLSFPPNRRTPRLAPPRRETGRRDPAPSRWAYRAQRLWLTPMFRTALRVGLPIVGVLLVVALIFASADRRAAMAGAFTGLVDSFQQRPEFMVTLLSVDGASPELSDRIRATLALKLPLSSFDIDLTAARARIESIDAVAQAEVRVRSGGLLEVRVTEREPAIIWRRAANLVLLDGTGRRVDDLAFRSERGDLAVIAGEGAERAVPEALEILAAARPILERIRGLVRMGERRWDIVLDRGQRIQLPVEEPVAAVERMIALDEAEDLLDRDVISVDLRIKDRPVLRLAPYALNAVRRARGIDTSGSDL.

The segment at 1–28 is disordered; sequence MQSLSFPPNRRTPRLAPPRRETGRRDPA. At 1-46 the chain is on the cytoplasmic side; the sequence is MQSLSFPPNRRTPRLAPPRRETGRRDPAPSRWAYRAQRLWLTPMFR. The span at 18 to 28 shows a compositional bias: basic and acidic residues; that stretch reads PRRETGRRDPA. Residues 47-67 traverse the membrane as a helical segment; that stretch reads TALRVGLPIVGVLLVVALIFA. Topologically, residues 68–308 are periplasmic; it reads SADRRAAMAG…RGIDTSGSDL (241 aa). Residues 92 to 160 enclose the POTRA domain; that stretch reads FMVTLLSVDG…GLLEVRVTER (69 aa).

This sequence belongs to the FtsQ/DivIB family. FtsQ subfamily.

The protein resides in the cell inner membrane. Its function is as follows. Essential cell division protein. The sequence is that of Cell division protein FtsQ from Cereibacter sphaeroides (strain ATCC 17023 / DSM 158 / JCM 6121 / CCUG 31486 / LMG 2827 / NBRC 12203 / NCIMB 8253 / ATH 2.4.1.) (Rhodobacter sphaeroides).